Here is a 215-residue protein sequence, read N- to C-terminus: 3-isopropylmalate dehydratase small subunit (215 aa).

It belongs to the LeuD family. LeuD type 1 subfamily. In terms of assembly, heterodimer of LeuC and LeuD.

The enzyme catalyses (2R,3S)-3-isopropylmalate = (2S)-2-isopropylmalate. The protein operates within amino-acid biosynthesis; L-leucine biosynthesis; L-leucine from 3-methyl-2-oxobutanoate: step 2/4. Functionally, catalyzes the isomerization between 2-isopropylmalate and 3-isopropylmalate, via the formation of 2-isopropylmaleate. The chain is 3-isopropylmalate dehydratase small subunit from Xanthomonas euvesicatoria pv. vesicatoria (strain 85-10) (Xanthomonas campestris pv. vesicatoria).